We begin with the raw amino-acid sequence, 262 residues long: Phosphatidylglycerol--prolipoprotein diacylglyceryl transferase (262 aa).

The next 4 helical transmembrane spans lie at 17 to 37 (LAIHWYGLMYLIGFALVYALG), 57 to 77 (LIFYSVLGVVLGGRLGYVLFY), 95 to 115 (GGMSFHGGLIGVIVVMLLFAH), and 119 to 139 (LGFFTVSDFIAPLIPLGLAAG). Residue R140 participates in a 1,2-diacyl-sn-glycero-3-phospho-(1'-sn-glycerol) binding. 3 helical membrane-spanning segments follow: residues 173 to 193 (PSQLYELGLEGIVLFALLWWY), 200 to 220 (AGQVSAMFLMGYGAFRFLVEF), and 227 to 247 (FLGLLAAGLSMGQWLSIPMVL).

The protein belongs to the Lgt family.

It localises to the cell inner membrane. The enzyme catalyses L-cysteinyl-[prolipoprotein] + a 1,2-diacyl-sn-glycero-3-phospho-(1'-sn-glycerol) = an S-1,2-diacyl-sn-glyceryl-L-cysteinyl-[prolipoprotein] + sn-glycerol 1-phosphate + H(+). Its pathway is protein modification; lipoprotein biosynthesis (diacylglyceryl transfer). In terms of biological role, catalyzes the transfer of the diacylglyceryl group from phosphatidylglycerol to the sulfhydryl group of the N-terminal cysteine of a prolipoprotein, the first step in the formation of mature lipoproteins. The chain is Phosphatidylglycerol--prolipoprotein diacylglyceryl transferase from Bordetella parapertussis (strain 12822 / ATCC BAA-587 / NCTC 13253).